The sequence spans 117 residues: Large ribosomal subunit protein uL18 (117 aa).

The protein belongs to the universal ribosomal protein uL18 family. In terms of assembly, part of the 50S ribosomal subunit; part of the 5S rRNA/L5/L18/L25 subcomplex. Contacts the 5S and 23S rRNAs.

This is one of the proteins that bind and probably mediate the attachment of the 5S RNA into the large ribosomal subunit, where it forms part of the central protuberance. This is Large ribosomal subunit protein uL18 from Tolumonas auensis (strain DSM 9187 / NBRC 110442 / TA 4).